A 369-amino-acid polypeptide reads, in one-letter code: Peptide chain release factor 2 (369 aa).

The residue at position 247 (glutamine 247) is an N5-methylglutamine.

The protein belongs to the prokaryotic/mitochondrial release factor family. Methylated by PrmC. Methylation increases the termination efficiency of RF2.

It localises to the cytoplasm. Peptide chain release factor 2 directs the termination of translation in response to the peptide chain termination codons UGA and UAA. In Phenylobacterium zucineum (strain HLK1), this protein is Peptide chain release factor 2.